The chain runs to 692 residues: Elongation factor G (692 aa).

The tr-type G domain occupies 8-282 (ENTRNIGIMA…AVIDYLPSPL (275 aa)). GTP contacts are provided by residues 17–24 (AHIDAGKT), 81–85 (DTPGH), and 135–138 (NKMD).

The protein belongs to the TRAFAC class translation factor GTPase superfamily. Classic translation factor GTPase family. EF-G/EF-2 subfamily.

The protein resides in the cytoplasm. Functionally, catalyzes the GTP-dependent ribosomal translocation step during translation elongation. During this step, the ribosome changes from the pre-translocational (PRE) to the post-translocational (POST) state as the newly formed A-site-bound peptidyl-tRNA and P-site-bound deacylated tRNA move to the P and E sites, respectively. Catalyzes the coordinated movement of the two tRNA molecules, the mRNA and conformational changes in the ribosome. The protein is Elongation factor G of Bacillus cereus (strain G9842).